The following is a 320-amino-acid chain: Aspartate carbamoyltransferase catalytic subunit (320 aa).

The carbamoyl phosphate site is built by R65 and T66. K93 is an L-aspartate binding site. Positions 115, 143, and 146 each coordinate carbamoyl phosphate. Residues R176 and R230 each contribute to the L-aspartate site. Positions 271 and 272 each coordinate carbamoyl phosphate.

This sequence belongs to the aspartate/ornithine carbamoyltransferase superfamily. ATCase family. Heterododecamer (2C3:3R2) of six catalytic PyrB chains organized as two trimers (C3), and six regulatory PyrI chains organized as three dimers (R2).

The catalysed reaction is carbamoyl phosphate + L-aspartate = N-carbamoyl-L-aspartate + phosphate + H(+). The protein operates within pyrimidine metabolism; UMP biosynthesis via de novo pathway; (S)-dihydroorotate from bicarbonate: step 2/3. Functionally, catalyzes the condensation of carbamoyl phosphate and aspartate to form carbamoyl aspartate and inorganic phosphate, the committed step in the de novo pyrimidine nucleotide biosynthesis pathway. In Maricaulis maris (strain MCS10) (Caulobacter maris), this protein is Aspartate carbamoyltransferase catalytic subunit.